The primary structure comprises 818 residues: Sodium/hydrogen exchanger 1 (818 aa).

The Extracellular portion of the chain corresponds to 1–98; that stretch reads MLLWSGICGL…FPVLGIDYTH (98 aa). The tract at residues 39 to 76 is disordered; that stretch reads PSPTASTIRGSEPPRERSIGDVTTAPPELAPESRPVNH. N75 carries N-linked (GlcNAc...) asparagine glycosylation. Residues 99–121 traverse the membrane as a helical segment; sequence VRTPFEISLWILLACLMKIGFHV. At 122–130 the chain is on the cytoplasmic side; it reads IPTISSIVP. A helical transmembrane segment spans residues 131 to 148; it reads ESCLLIVVGLLVGGLIKA. Topologically, residues 149–158 are extracellular; the sequence is VGETPPFLQS. Residues 159 to 176 form a helical membrane-spanning segment; sequence EVFFLFLLPPIILDAGYF. Over 177–186 the chain is Cytoplasmic; it reads LPLRQFTENL. A helical membrane pass occupies residues 187-215; it reads GTILIFAVVGTLWNAFFLGGLMYAVCLVG. Over 216–222 the chain is Extracellular; that stretch reads GEQINNI. Residues 223-249 traverse the membrane as a helical segment; it reads GLLDNLLFGSIISAVDPVAVLAVFEEI. Residues 250–252 lie on the Cytoplasmic side of the membrane; the sequence is HIN. The chain crosses the membrane as a helical span at residues 253–283; sequence ELLHILVFGESLLNDAVTVVLYHLFEEFANY. Residues 284–287 are Extracellular-facing; it reads DRVG. The chain crosses the membrane as a helical span at residues 288–322; sequence IVDIVLGFLSFFVVSLGGVFVGVVYGVIAAFTSRF. Residues 323–328 lie on the Cytoplasmic side of the membrane; sequence TSHIRV. Residues 329–341 form a helical membrane-spanning segment; it reads IEPLFVFLYSYMA. Topologically, residues 342 to 350 are extracellular; sequence YLSAELFHL. A helical membrane pass occupies residues 351–371; the sequence is SGIMALIASGVVMRPYVEANI. At 372 to 373 the chain is on the cytoplasmic side; it reads SH. Residues 374–404 form a helical membrane-spanning segment; the sequence is KSHTTIKYFLKMWSSVSETLIFIFLGVSTVA. Residues 405–410 are Extracellular-facing; it reads GSHHWN. The helical transmembrane segment at 411–438 threads the bilayer; that stretch reads WTFVISTLLFCLIARVLGVLGLTWFINK. Topologically, residues 439-444 are cytoplasmic; sequence FRIVKL. A helical transmembrane segment spans residues 445–469; sequence TPKDQFIIAYGGLRGAIAFSLGHLL. The Extracellular segment spans residues 470–475; the sequence is DKNHFP. A helical membrane pass occupies residues 476–505; that stretch reads MCDLFLTAIITVIFFTVFVQGMTIRPLVDL. Residues 503–545 form an interaction with TESC region; it reads VDLLAVKKKQETKRSINEEIHTQFLDHLLTGIEDICGHYGHHH. Residues 506 to 818 lie on the Cytoplasmic side of the membrane; the sequence is LAVKKKQETK…EGEPFIPKGQ (313 aa). The segment at 509 to 516 is PI(4,5)P2-binding region; that stretch reads KKKQETKR. The interaction with CHP2 stretch occupies residues 515 to 545; the sequence is KRSINEEIHTQFLDHLLTGIEDICGHYGHHH. A confers pH-dependent PI(4,5)P2 binding region spans residues 540–545; sequence HYGHHH. A PI(4,5)P2-binding region region spans residues 552–560; it reads RFNKKYVKK. A phosphoserine mark is found at S599 and S602. Phosphothreonine is present on T603. Phosphoserine is present on residues S605 and S648. The interval 633–818 is interaction with TESC; that stretch reads KILRNNLQKT…EGEPFIPKGQ (186 aa). Residues 633–818 form an interaction with CALM1 region; the sequence is KILRNNLQKT…EGEPFIPKGQ (186 aa). The interaction with PPP3CA stretch occupies residues 684–687; sequence LTVP. 3 positions are modified to phosphoserine: S693, S697, and S703. Positions 715–720 are interaction with PPP3CA; sequence PVITID. S723, S726, and S729 each carry phosphoserine. Positions 739–818 are disordered; it reads GKVLGLSREP…EGEPFIPKGQ (80 aa). Phosphothreonine is present on residues T752 and T782. Positions 785–794 are enriched in polar residues; the sequence is PSDSPSSQRI. Phosphoserine is present on residues S788, S790, and S799.

It belongs to the monovalent cation:proton antiporter 1 (CPA1) transporter (TC 2.A.36) family. As to quaternary structure, homodimer; dimerization is crucial for its function. Oligomer. Interacts with CALM in a calcium-dependent manner. Interacts with TESC. Interacts (via the juxtamembrane region of the cytoplasmic C-terminal domain) with CHP1; the interaction occurs at the plasma membrane in a calcium-dependent manner. Interacts with CHP2; the interaction occurs in a calcium-dependent manner. Interacts with EZR; regulates the cytoskeletal interactions of SLC9A1 and promotes stress fiber formation. In terms of processing, ubiquitinated, leading to its degradation by the proteasome. Ubiquitination is reduced by CHP1. O-glycosylated. Post-translationally, palmitoylated; may play a major role in SLC9A1 regulation. In terms of processing, phosphorylation at Thr-782 increases SLC9A1 activity. Specifically dephosphorylated at Thr-782 by PPP3CA that negatively regulates SLC9A1 activity. Phosphorylation at Ser-648 by AKT1 reduces SLC9A1 binding to CALM1.

Its subcellular location is the cell membrane. It localises to the basolateral cell membrane. It carries out the reaction Na(+)(in) + H(+)(out) = Na(+)(out) + H(+)(in). The enzyme catalyses Li(+)(out) + H(+)(in) = Li(+)(in) + H(+)(out). It catalyses the reaction Li(+)(in) + Na(+)(out) = Li(+)(out) + Na(+)(in). Its activity is regulated as follows. Activated at acidic pHs. Inhibited by cariporide and eniporide. Inhibited by amiloride and 5-amino-substituted derivatives. Phosphatidylinositol 4,5-bisphosphate (PI(4,5)P2) and phosphatidylinositol 3,4,5-trisphosphate (PI(3,4,5)P3) bind and differentially regulate SLC9A1 activity. Electroneutral Na(+) /H(+) antiporter that extrudes Na(+) in exchange for external protons driven by the inward sodium ion chemical gradient, protecting cells from acidification that occurs from metabolism. Exchanges intracellular H(+) ions for extracellular Na(+) in 1:1 stoichiometry. Plays a key role in maintening intracellular pH neutral and cell volume, and thus is important for cell growth, proliferation, migration and survival. In addition, can transport lithium Li(+) and also functions as a Na(+)/Li(+) antiporter. SLC9A1 also functions in membrane anchoring and organization of scaffolding complexes that coordinate signaling inputs. This Sus scrofa (Pig) protein is Sodium/hydrogen exchanger 1 (SLC9A1).